Here is a 306-residue protein sequence, read N- to C-terminus: Homoserine kinase (306 aa).

Residue 91–101 coordinates ATP; that stretch reads PLARGLGSSAT.

Belongs to the GHMP kinase family. Homoserine kinase subfamily.

Its subcellular location is the cytoplasm. The enzyme catalyses L-homoserine + ATP = O-phospho-L-homoserine + ADP + H(+). It functions in the pathway amino-acid biosynthesis; L-threonine biosynthesis; L-threonine from L-aspartate: step 4/5. Its function is as follows. Catalyzes the ATP-dependent phosphorylation of L-homoserine to L-homoserine phosphate. The sequence is that of Homoserine kinase from Synechocystis sp. (strain ATCC 27184 / PCC 6803 / Kazusa).